The sequence spans 204 residues: 3-isopropylmalate dehydratase small subunit (204 aa).

The protein belongs to the LeuD family. LeuD type 1 subfamily. Heterodimer of LeuC and LeuD.

It catalyses the reaction (2R,3S)-3-isopropylmalate = (2S)-2-isopropylmalate. It participates in amino-acid biosynthesis; L-leucine biosynthesis; L-leucine from 3-methyl-2-oxobutanoate: step 2/4. Catalyzes the isomerization between 2-isopropylmalate and 3-isopropylmalate, via the formation of 2-isopropylmaleate. The polypeptide is 3-isopropylmalate dehydratase small subunit (Ruthia magnifica subsp. Calyptogena magnifica).